The sequence spans 430 residues: Aspartate aminotransferase, mitochondrial (430 aa).

The N-terminal 29 residues, 1–29, are a transit peptide targeting the mitochondrion; sequence MALLHSGRFLSGVAAAFHPGLAAAASARA. Thr-48 bears the Phosphothreonine mark. Position 59 is an N6-acetyllysine (Lys-59). Gly-65 lines the substrate pocket. Lys-73 carries the N6-acetyllysine; alternate modification. An N6-succinyllysine; alternate modification is found at Lys-73. Lys-82 carries the post-translational modification N6-acetyllysine. At Lys-90 the chain carries N6-acetyllysine; alternate. Lys-90 is modified (N6-succinyllysine; alternate). Residue Tyr-96 is modified to 3'-nitrotyrosine; alternate. Tyr-96 carries the post-translational modification Phosphotyrosine; alternate. N6-acetyllysine; alternate is present on residues Lys-107 and Lys-122. N6-succinyllysine; alternate occurs at positions 107 and 122. Residue Ser-143 is modified to Phosphoserine. Lys-159 carries the N6-acetyllysine; alternate modification. Lys-159 carries the post-translational modification N6-succinyllysine; alternate. A substrate-binding site is contributed by Trp-162. Residue Lys-185 is modified to N6-acetyllysine; alternate. At Lys-185 the chain carries N6-succinyllysine; alternate. Asn-215 provides a ligand contact to substrate. Residue Lys-227 is modified to N6-succinyllysine. Position 234 is an N6-acetyllysine (Lys-234). N6-acetyllysine; alternate occurs at positions 279 and 296. Lys-279 is modified (N6-(pyridoxal phosphate)lysine; alternate). Residue Lys-296 is modified to N6-succinyllysine; alternate. The residue at position 302 (Lys-302) is an N6-acetyllysine. N6-acetyllysine; alternate is present on Lys-309. Position 309 is an N6-succinyllysine; alternate (Lys-309). Position 313 is an asymmetric dimethylarginine (Arg-313). Position 338 is an N6-acetyllysine; alternate (Lys-338). Residue Lys-338 is modified to N6-succinyllysine; alternate. Lys-345 bears the N6-acetyllysine mark. Residue Lys-363 is modified to N6-acetyllysine; alternate. Position 363 is an N6-succinyllysine; alternate (Lys-363). 2 positions are modified to N6-acetyllysine: Lys-364 and Lys-387. N6-acetyllysine; alternate occurs at positions 396 and 404. Residues Lys-396 and Lys-404 each carry the N6-succinyllysine; alternate modification. Residue Arg-407 participates in substrate binding.

The protein belongs to the class-I pyridoxal-phosphate-dependent aminotransferase family. In terms of assembly, homodimer. The cofactor is pyridoxal 5'-phosphate.

The protein localises to the mitochondrion matrix. It localises to the cell membrane. The catalysed reaction is L-aspartate + 2-oxoglutarate = oxaloacetate + L-glutamate. It catalyses the reaction L-kynurenine + 2-oxoglutarate = 4-(2-aminophenyl)-2,4-dioxobutanoate + L-glutamate. Its function is as follows. Catalyzes the irreversible transamination of the L-tryptophan metabolite L-kynurenine to form kynurenic acid (KA). As a member of the malate-aspartate shuttle, it has a key role in the intracellular NAD(H) redox balance. Is important for metabolite exchange between mitochondria and cytosol, and for amino acid metabolism. Facilitates cellular uptake of long-chain free fatty acids. The sequence is that of Aspartate aminotransferase, mitochondrial (GOT2) from Bos taurus (Bovine).